A 166-amino-acid chain; its full sequence is MLKEHAKLMKVFSDSGEIIGRKKLQKMIYIAKKMQFPFYEKYDFHFYGPYSEELTLQIEELCNLGFLHEVKEKKGGYFQYRYSLTETGSAFLDHADLDMPDMKGYIDSVNSRSSRFLELVSTILYFDGLEDEEKKEKVFTIKSKQKYTNEEYDEALQYIEELKQIC.

This is an uncharacterized protein from Bacillus subtilis (strain 168).